The sequence spans 317 residues: Pantothenate kinase (317 aa).

99–106 contributes to the ATP binding site; that stretch reads GSVSVGKS.

It belongs to the prokaryotic pantothenate kinase family.

Its subcellular location is the cytoplasm. The catalysed reaction is (R)-pantothenate + ATP = (R)-4'-phosphopantothenate + ADP + H(+). Its pathway is cofactor biosynthesis; coenzyme A biosynthesis; CoA from (R)-pantothenate: step 1/5. In Histophilus somni (strain 2336) (Haemophilus somnus), this protein is Pantothenate kinase.